The following is a 252-amino-acid chain: Hydroxyacylglutathione hydrolase (252 aa).

The Zn(2+) site is built by H52, H54, D56, H57, H107, D128, and H166.

Belongs to the metallo-beta-lactamase superfamily. Glyoxalase II family. Monomer. Zn(2+) serves as cofactor.

It carries out the reaction an S-(2-hydroxyacyl)glutathione + H2O = a 2-hydroxy carboxylate + glutathione + H(+). It functions in the pathway secondary metabolite metabolism; methylglyoxal degradation; (R)-lactate from methylglyoxal: step 2/2. In terms of biological role, thiolesterase that catalyzes the hydrolysis of S-D-lactoyl-glutathione to form glutathione and D-lactic acid. The chain is Hydroxyacylglutathione hydrolase from Neisseria meningitidis serogroup C (strain 053442).